Consider the following 841-residue polypeptide: Transcription regulator protein BACH2 (841 aa).

The region spanning 37-103 (CDVTLIVERK…AYTAKLLLSR (67 aa)) is the BTB domain. Disordered stretches follow at residues 153 to 173 (HEDC…TMDS), 204 to 226 (EALL…DALT), and 246 to 329 (SSHS…AACL). The span at 160–172 (AGEEEDEEEETMD) shows a compositional bias: acidic residues. 2 stretches are compositionally biased toward basic and acidic residues: residues 214–224 (TDTKESSEKDA) and 298–313 (PDAK…DRKQ). S315 bears the Phosphoserine mark. Glycyl lysine isopeptide (Lys-Gly) (interchain with G-Cter in SUMO2) cross-links involve residues K382 and K421. Residue S521 is modified to Phosphoserine; by RPS6KB1. Positions 583-610 (QSYGTNSSDESGSFSEADSESCPVQDRG) are disordered. The segment covering 584 to 598 (SYGTNSSDESGSFSE) has biased composition (polar residues). Residues 646–709 (FIHDVRRRSK…GELLDNFSCL (64 aa)) enclose the bZIP domain. The interval 651 to 667 (RRRSKNRIAAQRCRKRK) is basic motif. Positions 671 to 678 (IQNLECEI) are leucine-zipper. Residues 777–816 (PGPPWAPSNTSENCTSGRRLEGTDPGTFSERGPPLEPRSQ) form a disordered region. The Nuclear export signal motif lies at 821 to 841 (DFCQEMTDKCTTDEQPRKDYT).

It belongs to the bZIP family. CNC subfamily. As to quaternary structure, homodimer; disulfide-linked. Heterodimer of BACH2 and Maf-related transcription factors. In terms of processing, phosphorylation at Ser-521 downstream of the PI-3K pathway promotes nuclear export. The reversible disulfide bond may provide a mechanism to regulate the activity in oxidative stress responses. As to expression, B-cell specific.

The protein localises to the cytoplasm. It localises to the nucleus. Functionally, transcriptional regulator that acts as a repressor or activator. Binds to Maf recognition elements (MARE). Plays an important role in coordinating transcription activation and repression by MAFK. Induces apoptosis in response to oxidative stress through repression of the antiapoptotic factor HMOX1. Positively regulates the nuclear import of actin. Is a key regulator of adaptive immunity, crucial for the maintenance of regulatory T-cell function and B-cell maturation. The polypeptide is Transcription regulator protein BACH2 (BACH2) (Homo sapiens (Human)).